We begin with the raw amino-acid sequence, 574 residues long: 2-succinyl-5-enolpyruvyl-6-hydroxy-3-cyclohexene-1-carboxylate synthase (574 aa).

The protein belongs to the TPP enzyme family. MenD subfamily. In terms of assembly, homodimer. Mg(2+) serves as cofactor. Requires Mn(2+) as cofactor. Thiamine diphosphate is required as a cofactor.

It carries out the reaction isochorismate + 2-oxoglutarate + H(+) = 5-enolpyruvoyl-6-hydroxy-2-succinyl-cyclohex-3-ene-1-carboxylate + CO2. The protein operates within quinol/quinone metabolism; 1,4-dihydroxy-2-naphthoate biosynthesis; 1,4-dihydroxy-2-naphthoate from chorismate: step 2/7. It participates in cofactor biosynthesis; phylloquinone biosynthesis. Catalyzes the thiamine diphosphate-dependent decarboxylation of 2-oxoglutarate and the subsequent addition of the resulting succinic semialdehyde-thiamine pyrophosphate anion to isochorismate to yield 2-succinyl-5-enolpyruvyl-6-hydroxy-3-cyclohexene-1-carboxylate (SEPHCHC). The protein is 2-succinyl-5-enolpyruvyl-6-hydroxy-3-cyclohexene-1-carboxylate synthase of Prochlorococcus marinus (strain SARG / CCMP1375 / SS120).